The following is a 39-amino-acid chain: Potassium channel toxin alpha-KTx 2.23 (39 aa).

3 disulfide bridges follow: C7/C29, C13/C34, and C17/C36.

In terms of tissue distribution, expressed by the venom gland.

It is found in the secreted. Blocks human voltage-gated potassium (Kv) channels Kv1.1/KCNA1, Kv1.2/KCNA2 and Kv1.3/KCNA3. This chain is Potassium channel toxin alpha-KTx 2.23, found in Centruroides bonito (Scorpion).